The following is a 229-amino-acid chain: Claudin-25 (229 aa).

The Cytoplasmic portion of the chain corresponds to M1–Q10. Residues L11–P31 form a helical membrane-spanning segment. Over Q32 to R81 the chain is Extracellular. The chain crosses the membrane as a helical span at residues I82–S102. Residues E103 to T124 lie on the Cytoplasmic side of the membrane. The chain crosses the membrane as a helical span at residues L125–I145. Over Q146 to G164 the chain is Extracellular. A helical transmembrane segment spans residues A165 to F185. The Cytoplasmic portion of the chain corresponds to S186–I229.

Belongs to the claudin family.

Its subcellular location is the cell junction. The protein localises to the tight junction. It is found in the cell membrane. Functionally, plays a major role in tight junction-specific obliteration of the intercellular space, through calcium-independent cell-adhesion activity. The chain is Claudin-25 (CLDN25) from Homo sapiens (Human).